Reading from the N-terminus, the 513-residue chain is MDAIVVDSQNCFIIILLCSFSLISYFVFFKKPKVNFDLLPSPPSLPIIGHLHLLLSTLIHKSLQKLSSKYGPLLHLRIFNIPFILVSSDSLAYEIFRDHDVNVSSRGVGAIDESLAFGSSGFIQAPYGDYWKFMKKLIATKLLGPQPLVRSQDFRSEELERFYKRLFDKAMKKESVMIHKEASRFVNNSLYKMCTGRSFSVENNEVERIMELTADLGALSQKFFVSKMFRKLLEKLGISLFKTEIMVVSRRFSELVERILIEYEEKMDGHQGTQFMDALLAAYRDENTEYKITRSHIKSLLTEFFIGAADASSIAIQWAMADIINNREILEKLREEIDSVVGKTRLVQETDLPNLPYLQAVVKEGLRLHPPTPLVVREFQEGCEIGGFFVPKNTTLIVNSYAMMRDPDSWQDPDEFKPERFLASLSREEDKKEKILNFLPFGSGRRMCPGSNLGYIFVGTAIGMMVQCFDWEINGDKINMEEATGGFLITMAHPLTCTPIPLPRTQNSLISHL.

A helical transmembrane segment spans residues 9-29 (QNCFIIILLCSFSLISYFVFF). Cysteine 448 contacts heme.

This sequence belongs to the cytochrome P450 family. Requires heme as cofactor. In terms of tissue distribution, expressed in root stele, root cortex, root epidermis, root pericycle of the root hair zone, and quiescent center at the root meristematic zone.

The protein localises to the membrane. Functionally, cleaves the arabidiol side chain at C15 to form 14-apo-arabidiol and a side-chain fragment. Involved in the biosynthesis of the volatile homoterpene (E)-4,8-dimethyl-1,3,7-nonatriene (DMNT) in roots. Involved in the production of DMNT by degrading the triterpene arabidiol. May be involved in the defense again the fungal root pathogen Pythium irregulare by producing DMNT. In Arabidopsis thaliana (Mouse-ear cress), this protein is Cytochrome P450 705A1.